The following is a 92-amino-acid chain: Large ribosomal subunit protein bL28 (92 aa).

It belongs to the bacterial ribosomal protein bL28 family.

This is Large ribosomal subunit protein bL28 from Borreliella afzelii (strain PKo) (Borrelia afzelii).